A 388-amino-acid chain; its full sequence is Succinate--CoA ligase [ADP-forming] subunit beta (388 aa).

The region spanning 9–244 is the ATP-grasp domain; sequence KALFAEYGLP…PSQDDAREAH (236 aa). ATP contacts are provided by residues Lys46, 53–55, Glu99, Thr102, and Glu107; that span reads GRG. Mg(2+) contacts are provided by Asn199 and Asp213. Substrate contacts are provided by residues Asn264 and 321–323; that span reads GIV.

It belongs to the succinate/malate CoA ligase beta subunit family. In terms of assembly, heterotetramer of two alpha and two beta subunits. Requires Mg(2+) as cofactor.

The enzyme catalyses succinate + ATP + CoA = succinyl-CoA + ADP + phosphate. It carries out the reaction GTP + succinate + CoA = succinyl-CoA + GDP + phosphate. It participates in carbohydrate metabolism; tricarboxylic acid cycle; succinate from succinyl-CoA (ligase route): step 1/1. Succinyl-CoA synthetase functions in the citric acid cycle (TCA), coupling the hydrolysis of succinyl-CoA to the synthesis of either ATP or GTP and thus represents the only step of substrate-level phosphorylation in the TCA. The beta subunit provides nucleotide specificity of the enzyme and binds the substrate succinate, while the binding sites for coenzyme A and phosphate are found in the alpha subunit. The chain is Succinate--CoA ligase [ADP-forming] subunit beta from Shewanella pealeana (strain ATCC 700345 / ANG-SQ1).